We begin with the raw amino-acid sequence, 363 residues long: MSDTSPNYHTLQSIGWPWPGPPEDPAWQAIFAAHPQALPARVVEQHRTGYVVADTPEASLKAESLPEWQRPRFPSHERAAVGDWVLMEGKRIVALLPRRTSIKRGAAGEHYHQQVIAANIDTVFIVCGLDADFNPRRIERYLLLVGGGGAEPVVVLTKADQTEYAEDALAVLEELEAQNIALRAVNAKDPESVAALRPWLGDGRTAVLVGSSGAGKSTLTNTLLGTQKMKTNAVRENDSRGRHTTTHRALIPLPSGACLIDTPGMRELKPTGEEDLAEGGFSDVEALAAQCRFNDCAHIAEPGCAVRAAIEADQLDPERVANYMKLRVEVASAAEKLATRVAQNNRGKGSGKRPASVDRPGRR.

Residues 112–268 (HQQVIAANID…LIDTPGMREL (157 aa)) form the CP-type G domain. GTP is bound by residues 157 to 160 (TKAD) and 210 to 218 (GSSGAGKST). Zn(2+)-binding residues include cysteine 291, cysteine 296, histidine 298, and cysteine 304. A disordered region spans residues 340–363 (RVAQNNRGKGSGKRPASVDRPGRR).

The protein belongs to the TRAFAC class YlqF/YawG GTPase family. RsgA subfamily. As to quaternary structure, monomer. Associates with 30S ribosomal subunit, binds 16S rRNA. It depends on Zn(2+) as a cofactor.

Its subcellular location is the cytoplasm. Its function is as follows. One of several proteins that assist in the late maturation steps of the functional core of the 30S ribosomal subunit. Helps release RbfA from mature subunits. May play a role in the assembly of ribosomal proteins into the subunit. Circularly permuted GTPase that catalyzes slow GTP hydrolysis, GTPase activity is stimulated by the 30S ribosomal subunit. The protein is Small ribosomal subunit biogenesis GTPase RsgA of Xanthomonas campestris pv. campestris (strain 8004).